A 568-amino-acid chain; its full sequence is Sulfite reductase [NADPH] hemoprotein beta-component (568 aa).

[4Fe-4S] cluster is bound by residues cysteine 426, cysteine 432, cysteine 471, and cysteine 475. Position 475 (cysteine 475) interacts with siroheme.

This sequence belongs to the nitrite and sulfite reductase 4Fe-4S domain family. In terms of assembly, alpha(8)-beta(8). The alpha component is a flavoprotein, the beta component is a hemoprotein. Siroheme serves as cofactor. [4Fe-4S] cluster is required as a cofactor.

It carries out the reaction hydrogen sulfide + 3 NADP(+) + 3 H2O = sulfite + 3 NADPH + 4 H(+). It functions in the pathway sulfur metabolism; hydrogen sulfide biosynthesis; hydrogen sulfide from sulfite (NADPH route): step 1/1. Its function is as follows. Component of the sulfite reductase complex that catalyzes the 6-electron reduction of sulfite to sulfide. This is one of several activities required for the biosynthesis of L-cysteine from sulfate. The chain is Sulfite reductase [NADPH] hemoprotein beta-component from Xylella fastidiosa (strain 9a5c).